A 108-amino-acid polypeptide reads, in one-letter code: Large ribosomal subunit protein uL24 (108 aa).

The protein belongs to the universal ribosomal protein uL24 family. Part of the 50S ribosomal subunit.

Its function is as follows. One of two assembly initiator proteins, it binds directly to the 5'-end of the 23S rRNA, where it nucleates assembly of the 50S subunit. In terms of biological role, one of the proteins that surrounds the polypeptide exit tunnel on the outside of the subunit. This is Large ribosomal subunit protein uL24 from Citrifermentans bemidjiense (strain ATCC BAA-1014 / DSM 16622 / JCM 12645 / Bem) (Geobacter bemidjiensis).